Reading from the N-terminus, the 322-residue chain is Transaldolase (322 aa).

K136 serves as the catalytic Schiff-base intermediate with substrate.

This sequence belongs to the transaldolase family. Type 1 subfamily. As to quaternary structure, homodimer.

It localises to the cytoplasm. It carries out the reaction D-sedoheptulose 7-phosphate + D-glyceraldehyde 3-phosphate = D-erythrose 4-phosphate + beta-D-fructose 6-phosphate. It functions in the pathway carbohydrate degradation; pentose phosphate pathway; D-glyceraldehyde 3-phosphate and beta-D-fructose 6-phosphate from D-ribose 5-phosphate and D-xylulose 5-phosphate (non-oxidative stage): step 2/3. In terms of biological role, transaldolase is important for the balance of metabolites in the pentose-phosphate pathway. The sequence is that of Transaldolase from Xanthomonas campestris pv. campestris (strain B100).